Here is a 305-residue protein sequence, read N- to C-terminus: Mas-related G-protein coupled receptor member A7 (305 aa).

The Extracellular portion of the chain corresponds to 1–17; sequence MDETSPRSIDIESLIPN. The helical transmembrane segment at 18–38 threads the bilayer; sequence LMIIIFGLVGLTGNAIVLWLL. Residues 39 to 46 are Cytoplasmic-facing; the sequence is GFCLHRNA. A helical transmembrane segment spans residues 47–67; the sequence is FLVYILNLALADFLFLLCHFI. Over 68–81 the chain is Extracellular; it reads NSAMFLLKVPIPNG. The helical transmembrane segment at 82–102 threads the bilayer; that stretch reads IFVYCFYTIKMVLYITGLSML. At 103-129 the chain is on the cytoplasmic side; that stretch reads SAISTERCLSVLCPIWYHCRRPEHTST. A helical membrane pass occupies residues 130–150; sequence VMCAVIWIFSVLICILKEYFC. Residues 151–167 lie on the Extracellular side of the membrane; sequence DFFGTKLGNYYVCQASN. The chain crosses the membrane as a helical span at residues 168-188; sequence FFMGAYLMFLFVVLCLSTLAL. At 189 to 211 the chain is on the cytoplasmic side; that stretch reads LARLFCGAEKMKFTRLFVTIMLT. The helical transmembrane segment at 212 to 232 threads the bilayer; the sequence is ILVFLLCGLPWGFFWFLLIWI. Residues 233–244 are Extracellular-facing; it reads KGGFSVLDYRLY. A helical membrane pass occupies residues 245–265; it reads LASIVLTVVNSCANPIIYFFV. Residues 266–305 are Cytoplasmic-facing; sequence GSFRHRLKHQTLKMVLQSALQDTPETHENMVEMSRIKAEQ.

This sequence belongs to the G-protein coupled receptor 1 family. Mas subfamily. In terms of tissue distribution, expressed in a subset of sensory neurons that includes nociceptors. Expressed in the subclass of non-peptidergic sensory neurons that are IB4(+) and VR1(-).

It is found in the cell membrane. In terms of biological role, orphan receptor. May be a receptor for RFamide-family neuropeptides such as NPFF and NPAF, which are analgesic in vivo. May regulate nociceptor function and/or development, including the sensation or modulation of pain. This Mus musculus (Mouse) protein is Mas-related G-protein coupled receptor member A7 (Mrgpra7).